The primary structure comprises 190 residues: Small ribosomal subunit protein uS4 (190 aa).

One can recognise an S4 RNA-binding domain in the interval 105–181 (RRLQTLVYKL…RKKAKAAEGG (77 aa)). The disordered stretch occupies residues 163–190 (GGGRPGRVRRKKAKAAEGGDGDAEEDEE). The segment covering 181–190 (GDGDAEEDEE) has biased composition (acidic residues).

This sequence belongs to the universal ribosomal protein uS4 family.

This Podospora anserina (Pleurage anserina) protein is Small ribosomal subunit protein uS4 (RPS9).